A 497-amino-acid chain; its full sequence is Glycerol kinase (497 aa).

Residue threonine 11 coordinates ADP. ATP contacts are provided by threonine 11, serine 12, and serine 13. Threonine 11 contributes to the sn-glycerol 3-phosphate binding site. Arginine 15 is an ADP binding site. Sn-glycerol 3-phosphate is bound by residues arginine 81, glutamate 82, tyrosine 133, and aspartate 242. Residues arginine 81, glutamate 82, tyrosine 133, aspartate 242, and glutamine 243 each contribute to the glycerol site. Positions 264 and 307 each coordinate ADP. ATP contacts are provided by threonine 264, glycine 307, glutamine 311, and glycine 412. ADP-binding residues include glycine 412 and asparagine 416.

The protein belongs to the FGGY kinase family.

It carries out the reaction glycerol + ATP = sn-glycerol 3-phosphate + ADP + H(+). It functions in the pathway polyol metabolism; glycerol degradation via glycerol kinase pathway; sn-glycerol 3-phosphate from glycerol: step 1/1. Its activity is regulated as follows. Inhibited by fructose 1,6-bisphosphate (FBP). In terms of biological role, key enzyme in the regulation of glycerol uptake and metabolism. Catalyzes the phosphorylation of glycerol to yield sn-glycerol 3-phosphate. In Variovorax paradoxus (strain S110), this protein is Glycerol kinase.